The chain runs to 310 residues: Ribonuclease Z (310 aa).

Residues histidine 60, histidine 62, aspartate 64, histidine 65, histidine 140, aspartate 209, and histidine 269 each coordinate Zn(2+). The Proton acceptor role is filled by aspartate 64.

Belongs to the RNase Z family. In terms of assembly, homodimer. Zn(2+) is required as a cofactor.

The catalysed reaction is Endonucleolytic cleavage of RNA, removing extra 3' nucleotides from tRNA precursor, generating 3' termini of tRNAs. A 3'-hydroxy group is left at the tRNA terminus and a 5'-phosphoryl group is left at the trailer molecule.. In terms of biological role, zinc phosphodiesterase, which displays some tRNA 3'-processing endonuclease activity. Probably involved in tRNA maturation, by removing a 3'-trailer from precursor tRNA. The sequence is that of Ribonuclease Z from Methanococcus maripaludis (strain C7 / ATCC BAA-1331).